The chain runs to 194 residues: CASP-like protein 4D1 (194 aa).

Over 1–10 (MASRTVLLPS) the chain is Cytoplasmic. A helical membrane pass occupies residues 11–31 (AVLILRLLSLGLLAASLALIA). The Extracellular segment spans residues 32 to 55 (ADKLNVDSDPPQRYTFRDVYAYRY). A helical membrane pass occupies residues 56–76 (VLAVAVIGCAYTLLQLPLAAV). The Cytoplasmic segment spans residues 77–94 (SIIASGNNKRGIGAGGGS). The chain crosses the membrane as a helical span at residues 95–115 (VAVALLVLVLLADVVFALLLA). At 116–161 (TGAAAGFAFTYDVKRYLDGQFDDDSIGTPEVDKLHRDMDKFFDLAY) the chain is on the extracellular side. A helical membrane pass occupies residues 162 to 182 (AAAGLMLAAAACMALVIMLSV). Residues 183–194 (YSLARQVRSDYI) lie on the Cytoplasmic side of the membrane.

Belongs to the Casparian strip membrane proteins (CASP) family. In terms of assembly, homodimer and heterodimers.

The protein localises to the cell membrane. The chain is CASP-like protein 4D1 from Sorghum bicolor (Sorghum).